Reading from the N-terminus, the 393-residue chain is Sugar efflux transporter B (393 aa).

Transmembrane regions (helical) follow at residues 13–33, 51–71, 82–102, 106–126, 152–172, 174–194, 219–239, 253–273, 283–303, 306–326, 344–364, and 366–386; these read FDLT…AGAL, AMVG…SQFL, KSLI…FAWN, FVLL…NPQM, VSLA…GFSF, VMYL…WLFL, LLLF…IINM, LAGV…LIAG, FLMR…LMAH, VILL…GGIG, LYTN…GIVA, and IWNY…TLFC.

The protein belongs to the major facilitator superfamily. Set transporter family.

It is found in the cell inner membrane. Functionally, involved in the efflux of sugars. The physiological role may be the detoxification of non-metabolizable sugar analogs. Can transport lactose and glucose. The sequence is that of Sugar efflux transporter B (setB) from Escherichia coli (strain K12).